A 961-amino-acid chain; its full sequence is RNA polymerase II subunit A C-terminal domain phosphatase (961 aa).

Residue methionine 1 is modified to N-acetylmethionine. The FCP1 homology domain occupies 178 to 344 (HRNRKLVLMV…SRESQTRKKV (167 aa)). The tract at residues 328-589 (DMNAPPGSRE…EEEDTDEDDH (262 aa)) is disordered. A compositionally biased stretch (basic and acidic residues) spans 394–406 (DSPRPGKPDERDI). Serine 395 carries the phosphoserine modification. The segment covering 450-462 (LDFDLSSDSESSS) has biased composition (acidic residues). Positions 463-475 (ESEGTKSSSSASD) are enriched in low complexity. Over residues 575 to 588 (SMEEEEEEDTDEDD) the composition is skewed to acidic residues. Positions 629–728 (LKSKVLADVA…DKVEEQLFPL (100 aa)) constitute a BRCT domain. Residues serine 674 and serine 740 each carry the phosphoserine modification. 2 disordered regions span residues 730 to 752 (DDHT…GVPP) and 780 to 949 (KLIR…ADEM). Lysine 780 carries the post-translational modification N6-acetyllysine. The segment covering 793–803 (SSSLPIRQEPS) has biased composition (polar residues). Serine 839 bears the Phosphoserine mark. The segment covering 850–859 (CKEDLESMDK) has biased composition (basic and acidic residues). Composition is skewed to acidic residues over residues 860–873 (EVDD…DDSD) and 937–947 (NEDEGSSSEAD). Residues serine 869 and serine 872 each carry the phosphoserine modification.

As to quaternary structure, homodimer. Interacts with GTF2F1. Interacts with WDR77, SNRPB and SNRNP70. In terms of processing, phosphorylated. In the presence of TFIIF, the phosphorylated form has an increased CTD phosphatase activity. The phosphorylation is required for the physical interaction with GTF2F1. As to expression, ubiquitously expressed.

It is found in the nucleus. The protein localises to the cytoplasm. It localises to the cytoskeleton. Its subcellular location is the microtubule organizing center. The protein resides in the centrosome. It is found in the spindle pole. The protein localises to the midbody. The catalysed reaction is O-phospho-L-seryl-[protein] + H2O = L-seryl-[protein] + phosphate. The enzyme catalyses O-phospho-L-threonyl-[protein] + H2O = L-threonyl-[protein] + phosphate. Functionally, processively dephosphorylates 'Ser-2' and 'Ser-5' of the heptad repeats YSPTSPS in the C-terminal domain of the largest RNA polymerase II subunit. This promotes the activity of RNA polymerase II. Plays a role in the exit from mitosis by dephosphorylating crucial mitotic substrates (USP44, CDC20 and WEE1) that are required for M-phase-promoting factor (MPF)/CDK1 inactivation. This chain is RNA polymerase II subunit A C-terminal domain phosphatase (CTDP1), found in Homo sapiens (Human).